A 508-amino-acid chain; its full sequence is Histidine ammonia-lyase (508 aa).

A cross-link (5-imidazolinone (Ala-Gly)) is located at residues 141–143; it reads ASG. Residue Ser-142 is modified to 2,3-didehydroalanine (Ser).

The protein belongs to the PAL/histidase family. In terms of processing, contains an active site 4-methylidene-imidazol-5-one (MIO), which is formed autocatalytically by cyclization and dehydration of residues Ala-Ser-Gly.

The protein localises to the cytoplasm. It catalyses the reaction L-histidine = trans-urocanate + NH4(+). Its pathway is amino-acid degradation; L-histidine degradation into L-glutamate; N-formimidoyl-L-glutamate from L-histidine: step 1/3. The sequence is that of Histidine ammonia-lyase from Geobacillus sp. (strain WCH70).